The primary structure comprises 447 residues: N-succinylarginine dihydrolase (447 aa).

Residues 19–28 (AGLSFGNEAS), N110, and 137–138 (HR) each bind substrate. E174 is an active-site residue. R212 contributes to the substrate binding site. Residue H248 is part of the active site. Substrate-binding residues include D250 and N359. C365 acts as the Nucleophile in catalysis.

Belongs to the succinylarginine dihydrolase family. In terms of assembly, homodimer.

The catalysed reaction is N(2)-succinyl-L-arginine + 2 H2O + 2 H(+) = N(2)-succinyl-L-ornithine + 2 NH4(+) + CO2. It participates in amino-acid degradation; L-arginine degradation via AST pathway; L-glutamate and succinate from L-arginine: step 2/5. In terms of biological role, catalyzes the hydrolysis of N(2)-succinylarginine into N(2)-succinylornithine, ammonia and CO(2). This Shigella boydii serotype 4 (strain Sb227) protein is N-succinylarginine dihydrolase.